The sequence spans 365 residues: MSRPVPNPGILDIAPYTPGKSPVAQPGRKVFKLSANETPFGPSPHAIAAYQSAADHLEDYPEGTSRVLREAIGKTFGLDPDRIICGAGSDEILNLLAHTYLAPGDEAIATTYGFLVYPIATMANGAKLVIAEEKNLTCDVDAILAKVSPNTKLVWLANPNNPTGTYIPFDEVRRLRAGLPEHVVLVLDGAYADYVAKNDYETGIELVSTTENTVVCHTFSKIHGLAALRIGWMFGPANIVDAVNRIRGPFNTSVPAQLAAVAAIKDTAHVEMSRAHTIQWRDRLTEEFTKLGLTVTPSVCNFVLMHFPQTAGKTAAEADAFLTQRGLVLRGLNNYGLPHALRMTIGTDEANELVIAALREFMAQP.

Residues 1 to 22 (MSRPVPNPGILDIAPYTPGKSP) are disordered. K221 is modified (N6-(pyridoxal phosphate)lysine).

This sequence belongs to the class-II pyridoxal-phosphate-dependent aminotransferase family. Histidinol-phosphate aminotransferase subfamily. As to quaternary structure, homodimer. The cofactor is pyridoxal 5'-phosphate.

The catalysed reaction is L-histidinol phosphate + 2-oxoglutarate = 3-(imidazol-4-yl)-2-oxopropyl phosphate + L-glutamate. It functions in the pathway amino-acid biosynthesis; L-histidine biosynthesis; L-histidine from 5-phospho-alpha-D-ribose 1-diphosphate: step 7/9. The protein is Histidinol-phosphate aminotransferase of Rhodopseudomonas palustris (strain BisA53).